The following is a 1034-amino-acid chain: Isoleucine--tRNA ligase (1034 aa).

The 'HIGH' region signature appears at 48 to 58 (PTANGKPHIGH). Residues 588 to 592 (KMSKH) carry the 'KMSKS' region motif. Lys-591 contacts ATP.

This sequence belongs to the class-I aminoacyl-tRNA synthetase family. IleS type 2 subfamily. As to quaternary structure, monomer. Zn(2+) serves as cofactor.

It is found in the cytoplasm. The enzyme catalyses tRNA(Ile) + L-isoleucine + ATP = L-isoleucyl-tRNA(Ile) + AMP + diphosphate. Its function is as follows. Catalyzes the attachment of isoleucine to tRNA(Ile). As IleRS can inadvertently accommodate and process structurally similar amino acids such as valine, to avoid such errors it has two additional distinct tRNA(Ile)-dependent editing activities. One activity is designated as 'pretransfer' editing and involves the hydrolysis of activated Val-AMP. The other activity is designated 'posttransfer' editing and involves deacylation of mischarged Val-tRNA(Ile). The polypeptide is Isoleucine--tRNA ligase (Clostridium kluyveri (strain ATCC 8527 / DSM 555 / NBRC 12016 / NCIMB 10680 / K1)).